The primary structure comprises 332 residues: Small ribosomal subunit biogenesis GTPase RsgA (332 aa).

The region spanning R103 to L259 is the CP-type G domain. GTP is bound by residues T148 to D151 and G201 to T209. 4 residues coordinate Zn(2+): C281, C286, H288, and C294.

It belongs to the TRAFAC class YlqF/YawG GTPase family. RsgA subfamily. As to quaternary structure, monomer. Associates with 30S ribosomal subunit, binds 16S rRNA. The cofactor is Zn(2+).

The protein resides in the cytoplasm. One of several proteins that assist in the late maturation steps of the functional core of the 30S ribosomal subunit. Helps release RbfA from mature subunits. May play a role in the assembly of ribosomal proteins into the subunit. Circularly permuted GTPase that catalyzes slow GTP hydrolysis, GTPase activity is stimulated by the 30S ribosomal subunit. The chain is Small ribosomal subunit biogenesis GTPase RsgA from Xylella fastidiosa (strain M12).